Reading from the N-terminus, the 300-residue chain is 4-hydroxy-tetrahydrodipicolinate synthase (300 aa).

Position 45 (T45) interacts with pyruvate. The Proton donor/acceptor role is filled by Y140. The Schiff-base intermediate with substrate role is filled by K169. I210 provides a ligand contact to pyruvate.

Belongs to the DapA family. Homotetramer; dimer of dimers.

Its subcellular location is the cytoplasm. The enzyme catalyses L-aspartate 4-semialdehyde + pyruvate = (2S,4S)-4-hydroxy-2,3,4,5-tetrahydrodipicolinate + H2O + H(+). The protein operates within amino-acid biosynthesis; L-lysine biosynthesis via DAP pathway; (S)-tetrahydrodipicolinate from L-aspartate: step 3/4. Functionally, catalyzes the condensation of (S)-aspartate-beta-semialdehyde [(S)-ASA] and pyruvate to 4-hydroxy-tetrahydrodipicolinate (HTPA). The chain is 4-hydroxy-tetrahydrodipicolinate synthase from Helicobacter pylori (strain Shi470).